The following is a 199-amino-acid chain: Probable nicotinate-nucleotide adenylyltransferase (199 aa).

The protein belongs to the NadD family.

The enzyme catalyses nicotinate beta-D-ribonucleotide + ATP + H(+) = deamido-NAD(+) + diphosphate. Its pathway is cofactor biosynthesis; NAD(+) biosynthesis; deamido-NAD(+) from nicotinate D-ribonucleotide: step 1/1. Its function is as follows. Catalyzes the reversible adenylation of nicotinate mononucleotide (NaMN) to nicotinic acid adenine dinucleotide (NaAD). This chain is Probable nicotinate-nucleotide adenylyltransferase, found in Roseobacter denitrificans (strain ATCC 33942 / OCh 114) (Erythrobacter sp. (strain OCh 114)).